Reading from the N-terminus, the 61-residue chain is Japonicin-1CDYa (61 aa).

The signal sequence occupies residues 1-22; that stretch reads MFTLKKSLLLLFFLGVINVSLC. A propeptide spanning residues 23-45 is cleaved from the precursor; it reads EEERDADEEERRDDPEERDVEVE. An intrachain disulfide couples Cys55 to Cys61.

This sequence belongs to the frog skin active peptide (FSAP) family. Brevinin subfamily. As to expression, expressed by the skin glands.

It localises to the secreted. Antimicrobial peptide. Has low activity against the Gram-positive bacterium S.aureus (MIC&gt;100 uM) and the Gram-negative bacterium E.coli (MIC=25 uM). Lacks hemolytic activity against human erythrocytes. In Rana dybowskii (Dybovsky's frog), this protein is Japonicin-1CDYa.